A 483-amino-acid polypeptide reads, in one-letter code: S-adenosylhomocysteine hydrolase-like protein 1 (483 aa).

The disordered stretch occupies residues 1-56; it reads MQEFTKFPTKTGRRSLSRSISQSSTDSYSSAASYTDSSDDEVSPREKQQTNSKGSS. Low complexity predominate over residues 17–36; the sequence is SRSISQSSTDSYSSAASYTD. Positions 18–45 are PEST; the sequence is RSISQSSTDSYSSAASYTDSSDDEVSPR. S21 carries the post-translational modification Phosphoserine; by PKD. Residues S24, S27, S30, and S37 each carry the phosphoserine modification. An interaction with BCL2L10 region spans residues 91 to 154; the sequence is QGEKPLAGAK…EAGVAVFAWK (64 aa). The substrate site is built by T108, D182, E207, K237, and D241. The NAD binding stretch occupies residues 234 to 401; it reads SVTKQKFDNL…EGRLLNLSCS (168 aa). NAD(+)-binding positions include 271–275, E294, and N329; that span reads GYGEV. Residue S344 is modified to Phosphoserine. 350–352 is a binding site for NAD(+); sequence MGH. A PDZ-binding region spans residues 473 to 483; it reads NGPFKPNYYRY.

Belongs to the adenosylhomocysteinase family. In terms of assembly, forms multimers. Forms heteromultimers with AHCYL2 (via the C-terminal region). Interacts (when phosphorylated) with ITPR1 (when not phosphorylated); the interaction suppresses inositol 1,4,5-trisphosphate binding to ITPR1. Interacts with BCL2L10; this strengthens the interaction of AHCYL1 with ITPR1. Interacts with CFTR and SLC26A6; the interactions take place once AHCYL1 is released from ITPR1 and increase CFTR and SLC26A6 activities. Interacts with RRM1; in a phosphorylation- and (dATP)-dependent manner. Interacts (via PEST domain when phosphorylated) with SLC4A4 isoform 1 but not isoform 2; the interaction increases SLC4A4 isoform 1 activity. Interacts (when phosphorylated) with SLC9A3; the interaction is required for SLC9A3 apical location and activity. Interacts (when phosphorylated) with FIP1L1; the interaction is direct and associates AHCYL1 with the CPSF complex and RNA. Interacts with PAPOLA. Interacts with ZCCHC4. Interacts with AHCY. NAD(+) serves as cofactor. In terms of processing, phosphorylated at Ser/Thr residues between Ser-21 and Thr-25 in the PEST region: required for interaction with dATP-bound RRM1 and ITPR1. Phosphorylation at Ser-21 by PRKD1 and CAMK4 is required for further phosphorylations by CSNK1A1. Phosphorylation is induced by oxidative stress. Probably phosphorylated by CAMK2A; phosphorylation at Ser-21 may be required for interaction with SLC9A3. Dephosphorylated in response to apoptotic stress conditions which causes translocation of both AHCYL1 and BCL2L10 from mitochondria-associated endoplasmic reticulum membranes and promotes apoptosis. Expressed in kidney proximal tubules and outer medulla (at protein level).

The protein resides in the endoplasmic reticulum. Its subcellular location is the cytoplasm. The protein localises to the cytosol. It localises to the apical cell membrane. It is found in the microsome. Functionally, multifaceted cellular regulator which coordinates several essential cellular functions including regulation of epithelial HCO3(-) and fluid secretion, mRNA processing and DNA replication. Regulates ITPR1 sensitivity to inositol 1,4,5-trisphosphate, competing for the common binding site and acting as endogenous 'pseudoligand' whose inhibitory activity can be modulated by its phosphorylation status. Promotes the formation of contact points between the endoplasmic reticulum (ER) and mitochondria, facilitating transfer of Ca(2+) from the ER to mitochondria. Under normal cellular conditions, functions cooperatively with BCL2L10 to limit ITPR1-mediated Ca(2+) release but, under apoptotic stress conditions, dephosphorylated which promotes dissociation of both AHCYL1 and BCL2L10 from mitochondria-associated endoplasmic reticulum membranes, inhibits BCL2L10 interaction with ITPR1 and leads to increased Ca(2+) transfer to mitochondria which promotes apoptosis. In the pancreatic and salivary ducts, at resting state, attenuates inositol 1,4,5-trisphosphate-induced calcium release by interacting with ITPR1. When extracellular stimuli induce ITPR1 phosphorylation or inositol 1,4,5-trisphosphate production, dissociates from ITPR1 to interact with CFTR and SLC26A6, mediating their synergistic activation by calcium and cAMP that stimulates the epithelial secretion of electrolytes and fluid. Also activates basolateral SLC4A4 isoform 1 to coordinate fluid and HCO3(-) secretion. Inhibits the effect of STK39 on SLC4A4 and CFTR by recruiting PP1 phosphatase which activates SLC4A4, SLC26A6 and CFTR through dephosphorylation. Mediates the induction of SLC9A3 surface expression produced by Angiotensin-2. Depending on the cell type, activates SLC9A3 in response to calcium or reverses SLC9A3R2-dependent calcium inhibition. May modulate the polyadenylation state of specific mRNAs, both by controlling the subcellular location of FIP1L1 and by inhibiting PAPOLA activity, in response to a stimulus that alters its phosphorylation state. Acts as a (dATP)-dependent inhibitor of ribonucleotide reductase large subunit RRM1, controlling the endogenous dNTP pool and ensuring normal cell cycle progression. In vitro does not exhibit any S-adenosyl-L-homocysteine hydrolase activity. This chain is S-adenosylhomocysteine hydrolase-like protein 1, found in Rattus norvegicus (Rat).